The chain runs to 623 residues: Trehalase (623 aa).

Belongs to the glycosyl hydrolase 15 family. In terms of assembly, monomer.

The enzyme catalyses alpha,alpha-trehalose + H2O = alpha-D-glucose + beta-D-glucose. The protein operates within glycan degradation; trehalose degradation; D-glucose from alpha,alpha-trehalose: step 1/1. Inhibited by validamycin A. Functionally, catalyzes the hydrolysis of alpha,alpha-trehalose into two molecules of D-glucose. This is Trehalase from Thermoplasma volcanium (strain ATCC 51530 / DSM 4299 / JCM 9571 / NBRC 15438 / GSS1).